The sequence spans 439 residues: Glucan 1,3-beta-glucosidase (439 aa).

The signal sequence occupies residues 1 to 18 (MLLSLLFLLSTFAFGALT). The active-site Proton donor is the Glu227. Disulfide bonds link Cys311-Cys437 and Cys336-Cys366. Glu328 (nucleophile) is an active-site residue.

This sequence belongs to the glycosyl hydrolase 5 (cellulase A) family.

The protein localises to the secreted. The enzyme catalyses Successive hydrolysis of beta-D-glucose units from the non-reducing ends of (1-&gt;3)-beta-D-glucans, releasing alpha-glucose.. Its function is as follows. Beta-glucanases participate in the metabolism of beta-glucan, the main structural component of the cell wall. It could also function biosynthetically as a transglycosylase. This chain is Glucan 1,3-beta-glucosidase (EXG1), found in Lachancea kluyveri (strain ATCC 58438 / CBS 3082 / BCRC 21498 / NBRC 1685 / JCM 7257 / NCYC 543 / NRRL Y-12651) (Yeast).